Reading from the N-terminus, the 522-residue chain is Ribose import ATP-binding protein RbsA 1 (522 aa).

ABC transporter domains follow at residues 8–243 (LRIE…GRSI) and 249–496 (RERP…VSTN). Position 40-47 (40-47 (GENGAGKS)) interacts with ATP. The interval 492 to 522 (AVSTNQYKPDKSDKPDASAGKTDQKEAPRGH) is disordered. Basic and acidic residues predominate over residues 499–522 (KPDKSDKPDASAGKTDQKEAPRGH).

This sequence belongs to the ABC transporter superfamily. Ribose importer (TC 3.A.1.2.1) family. As to quaternary structure, the complex is composed of an ATP-binding protein (RbsA), two transmembrane proteins (RbsC) and a solute-binding protein (RbsB).

The protein localises to the cell membrane. The catalysed reaction is D-ribose(out) + ATP + H2O = D-ribose(in) + ADP + phosphate + H(+). In terms of biological role, part of the ABC transporter complex RbsABC involved in ribose import. Responsible for energy coupling to the transport system. The sequence is that of Ribose import ATP-binding protein RbsA 1 from Streptomyces avermitilis (strain ATCC 31267 / DSM 46492 / JCM 5070 / NBRC 14893 / NCIMB 12804 / NRRL 8165 / MA-4680).